The primary structure comprises 147 residues: Cyanate hydratase (147 aa).

Active-site residues include R88, E91, and S114.

It belongs to the cyanase family.

It carries out the reaction cyanate + hydrogencarbonate + 3 H(+) = NH4(+) + 2 CO2. Functionally, catalyzes the reaction of cyanate with bicarbonate to produce ammonia and carbon dioxide. This is Cyanate hydratase from Prochlorococcus marinus (strain NATL2A).